Consider the following 370-residue polypeptide: Phosphate-binding protein PstS 2 (370 aa).

Positions 1–22 are cleaved as a signal peptide; the sequence is MKFARSGAAVSLLAAGTLVLTA. Cysteine 23 carries the N-palmitoyl cysteine lipid modification. Cysteine 23 is lipidated: S-diacylglycerol cysteine. Phosphate is bound by residues 54 to 56, serine 84, aspartate 102, and 191 to 193; these read STA and SGT.

It belongs to the PstS family. In terms of assembly, the complex is composed of two ATP-binding proteins (PstB), two transmembrane proteins (PstC and PstA) and a solute-binding protein (PstS).

The protein localises to the cell membrane. In terms of biological role, functions in inorganic phosphate uptake, although probably not the main uptake protein under phosphate starvation. Part of the ABC transporter complex PstSACB involved in phosphate import. In Mycobacterium tuberculosis (strain ATCC 25618 / H37Rv), this protein is Phosphate-binding protein PstS 2 (pstS2).